The sequence spans 301 residues: MTTLDDKLLGEKLQYYYSSSEEEDSDHEDKDRGRGALAGSSMPADADLAGEGISVNTGPKGVINDWRRFKQLETEQREEQCREMERLIKKLSLSCRSHLDEEEEQRKQKDLQEKISGKMTLKDLAVMNEDQDDEEFLQQYRKQRMEEMRQQLYQGPQFKQVFEIPSGEGFLDMIDKEQRSTLIMVHIYEDGIPGTEAMNGCMLCLAAEYPAVKFCRVRSSVIGASSRFTRNALPALLIYKGGELIGNFVRVTDQLGEDFFAVDLEAFLQEFGLLPEKEVLLRTSVRNSATCHSEDSDLEID.

At Thr-2 the chain carries N-acetylthreonine. Positions 15-53 (YYYSSSEEEDSDHEDKDRGRGALAGSSMPADADLAGEGI) are disordered. 5 positions are modified to phosphoserine: Ser-20, Ser-25, Ser-226, Ser-293, and Ser-296. Residues 37-299 (LAGSSMPADA…TCHSEDSDLE (263 aa)) enclose the Phosducin domain. A thioredoxin fold region spans residues 158–301 (FKQVFEIPSG…HSEDSDLEID (144 aa)).

It belongs to the phosducin family. Forms a complex with the beta and gamma subunits of the GTP-binding protein, transducin. Interacts with the CCT chaperonin complex.

The protein localises to the cell projection. Its subcellular location is the cilium. Its function is as follows. Functions as a co-chaperone for CCT in the assembly of heterotrimeric G protein complexes, facilitates the assembly of both Gbeta-Ggamma and RGS-Gbeta5 heterodimers. Also acts as a positive regulator of hedgehog signaling and regulates ciliary function. The protein is Phosducin-like protein (PDCL) of Bos taurus (Bovine).